A 230-amino-acid chain; its full sequence is Protein GrpE (230 aa).

Disordered stretches follow at residues 1–28 (MADEKNKPENPDLDQRDINNPRDREALK) and 209–230 (GVSKGGPKVSAENGASTSEDNA). The segment covering 221–230 (NGASTSEDNA) has biased composition (polar residues).

Belongs to the GrpE family. Homodimer.

It localises to the cytoplasm. Functionally, participates actively in the response to hyperosmotic and heat shock by preventing the aggregation of stress-denatured proteins, in association with DnaK and GrpE. It is the nucleotide exchange factor for DnaK and may function as a thermosensor. Unfolded proteins bind initially to DnaJ; upon interaction with the DnaJ-bound protein, DnaK hydrolyzes its bound ATP, resulting in the formation of a stable complex. GrpE releases ADP from DnaK; ATP binding to DnaK triggers the release of the substrate protein, thus completing the reaction cycle. Several rounds of ATP-dependent interactions between DnaJ, DnaK and GrpE are required for fully efficient folding. The polypeptide is Protein GrpE (Brucella ovis (strain ATCC 25840 / 63/290 / NCTC 10512)).